Here is a 135-residue protein sequence, read N- to C-terminus: Small ribosomal subunit protein uS12 (135 aa).

Position 89 is a 3-methylthioaspartic acid (D89). Residues 108–135 (NKRTVSRSKYGTKKAKATDKKATDSKKK) form a disordered region. Basic residues predominate over residues 111 to 122 (TVSRSKYGTKKA). The span at 123–135 (KATDKKATDSKKK) shows a compositional bias: basic and acidic residues.

It belongs to the universal ribosomal protein uS12 family. As to quaternary structure, part of the 30S ribosomal subunit. Contacts proteins S8 and S17. May interact with IF1 in the 30S initiation complex.

With S4 and S5 plays an important role in translational accuracy. Functionally, interacts with and stabilizes bases of the 16S rRNA that are involved in tRNA selection in the A site and with the mRNA backbone. Located at the interface of the 30S and 50S subunits, it traverses the body of the 30S subunit contacting proteins on the other side and probably holding the rRNA structure together. The combined cluster of proteins S8, S12 and S17 appears to hold together the shoulder and platform of the 30S subunit. In Helicobacter pylori (strain HPAG1), this protein is Small ribosomal subunit protein uS12.